Here is a 274-residue protein sequence, read N- to C-terminus: 4-diphosphocytidyl-2-C-methyl-D-erythritol kinase (274 aa).

Lysine 7 is a catalytic residue. ATP is bound at residue proline 90–serine 100. Residue aspartate 132 is part of the active site.

The protein belongs to the GHMP kinase family. IspE subfamily.

The enzyme catalyses 4-CDP-2-C-methyl-D-erythritol + ATP = 4-CDP-2-C-methyl-D-erythritol 2-phosphate + ADP + H(+). Its pathway is isoprenoid biosynthesis; isopentenyl diphosphate biosynthesis via DXP pathway; isopentenyl diphosphate from 1-deoxy-D-xylulose 5-phosphate: step 3/6. In terms of biological role, catalyzes the phosphorylation of the position 2 hydroxy group of 4-diphosphocytidyl-2C-methyl-D-erythritol. This Dechloromonas aromatica (strain RCB) protein is 4-diphosphocytidyl-2-C-methyl-D-erythritol kinase.